We begin with the raw amino-acid sequence, 158 residues long: RHSAQSIETQSTSSEELVPSPPSPLPPPRVYKPCFVCQDKSSGYHYGVSACEGCKGFFRRSIQKNMIYTCHRDKNCVINKVTRNRCQYCRLQRCFEVGMSKESVRNDRNKKKKEPIKQECIESLEMTAELDDLTEKIRKAHQETFPSLCQLGKYTTNS.

Residues 1-18 (RHSAQSIETQSTSSEELV) show a composition bias toward low complexity. Residues 1–24 (RHSAQSIETQSTSSEELVPSPPSP) are disordered. Positions 31 to 106 (YKPCFVCQDK…VGMSKESVRN (76 aa)) form a DNA-binding region, nuclear receptor. 2 consecutive NR C4-type zinc fingers follow at residues 34–54 (CFVCQDKSSGYHYGVSACEGC) and 70–94 (CHRDKNCVINKVTRNRCQYCRLQRC). Positions 129 to 158 (ELDDLTEKIRKAHQETFPSLCQLGKYTTNS) constitute an NR LBD domain.

It belongs to the nuclear hormone receptor family. NR1 subfamily. Heterodimer; with a RXR molecule. Binds DNA preferentially as a RAR/RXR heterodimer.

It is found in the nucleus. Functionally, receptor for retinoic acid. Retinoic acid receptors bind as heterodimers to their target response elements in response to their ligands, all-trans or 9-cis retinoic acid, and regulate gene expression in various biological processes. The RAR/RXR heterodimers bind to the retinoic acid response elements (RARE) composed of tandem 5'-AGGTCA-3' sites known as DR1-DR5. In Notophthalmus viridescens (Eastern newt), this protein is Retinoic acid receptor beta (RARB).